Reading from the N-terminus, the 132-residue chain is Small ribosomal subunit protein uS8c (132 aa).

The protein belongs to the universal ribosomal protein uS8 family. In terms of assembly, part of the 30S ribosomal subunit.

It is found in the plastid. It localises to the chloroplast. In terms of biological role, one of the primary rRNA binding proteins, it binds directly to 16S rRNA central domain where it helps coordinate assembly of the platform of the 30S subunit. The polypeptide is Small ribosomal subunit protein uS8c (rps8) (Staurastrum punctulatum (Green alga)).